The sequence spans 1081 residues: Psi-producing oxygenase A (1081 aa).

A linoleate 8R-lipoxygenase region spans residues 105–446 (TKSFLNMLWN…DGAFNDDDLV (342 aa)). His-202 lines the heme b pocket. Tyr-374 is an active-site residue. His-377 is a binding site for heme b. The segment at 654–1081 (IFISSHAACM…GELPQLKEDF (428 aa)) is 9,12-octadecadienoate 8-hydroperoxide 8R-isomerase.

Belongs to the peroxidase family. In terms of assembly, homotetramer. Requires heme b as cofactor.

The catalysed reaction is (9Z,12Z)-octadecadienoate + O2 = (8R,9Z,12Z)-8-hydroperoxyoctadeca-9,12-dienoate. It catalyses the reaction (8R,9Z,12Z)-8-hydroperoxyoctadeca-9,12-dienoate = (5S,8R,9Z,12Z)-5,8-dihydroxyoctadeca-9,12-dienoate. Functionally, bifunctional heme-containing enzyme that oxidizes linoleic acid to (8R,9Z,12Z)-8-hydroperoxyoctadeca-9,12-dienoate (within the N-terminal heme peroxidase domain), which is subsequently isomerized to (5S,8R,9Z,12Z)-5,8-dihydroxyoctadeca-9,12-dienoate (within the C-terminal P450 heme thiolate domain). Oxidized unsaturated fatty acids, so-called oxylipins, derived from endogenous fatty acids, influence the development of the asexual conidiophores and sexual cleistothecia and regulate the secondary metabolism. These substances were collectively named psi factors and are primarily a mixture of hydroxylated oleic, linoleic and alpha-linolenic acids. They are termed psi-beta, psi-alpha, and psi-gamma, respectively. This is Psi-producing oxygenase A (ppoA) from Emericella nidulans (Aspergillus nidulans).